The chain runs to 277 residues: Ubiquitin-conjugating enzyme suppressor 1 (277 aa).

Residues arginine 254–isoleucine 277 form a disordered region.

Functionally, not known; its elevated expression suppresses the conditional cell cycle defects associated with UBC3/CDC34 mutations. The protein is Ubiquitin-conjugating enzyme suppressor 1 (UBS1) of Saccharomyces cerevisiae (strain ATCC 204508 / S288c) (Baker's yeast).